Consider the following 294-residue polypeptide: Tyrosine-protein phosphatase (294 aa).

Positions 1-24 (MKTHHANLALALMLGLSSSATAVA) are cleaved as a signal peptide. The active-site Phosphocysteine intermediate is the cysteine 182. Composition is skewed to basic and acidic residues over residues 221 to 231 (QPKDSDERADH) and 238 to 247 (PGDRPQDGGH). Positions 221 to 252 (QPKDSDERADHGAGQAEPGDRPQDGGHGRYRA) are disordered.

This sequence belongs to the protein-tyrosine phosphatase family. As to quaternary structure, monomer.

It catalyses the reaction O-phospho-L-tyrosyl-[protein] + H2O = L-tyrosyl-[protein] + phosphate. The protein is Tyrosine-protein phosphatase (iphP) of Nostoc commune.